The primary structure comprises 353 residues: Glycerol-3-phosphate dehydrogenase [NAD(P)+] (353 aa).

Residues Trp-11, Arg-40, and Lys-115 each coordinate NADPH. Sn-glycerol 3-phosphate contacts are provided by Lys-115, Gly-156, and Ser-158. Position 160 (Ala-160) interacts with NADPH. Residues Lys-211, Asp-264, Ser-274, Arg-275, and Asn-276 each contribute to the sn-glycerol 3-phosphate site. The active-site Proton acceptor is the Lys-211. Arg-275 lines the NADPH pocket. Val-299 and Glu-301 together coordinate NADPH.

Belongs to the NAD-dependent glycerol-3-phosphate dehydrogenase family.

It is found in the cytoplasm. The enzyme catalyses sn-glycerol 3-phosphate + NAD(+) = dihydroxyacetone phosphate + NADH + H(+). It carries out the reaction sn-glycerol 3-phosphate + NADP(+) = dihydroxyacetone phosphate + NADPH + H(+). Its pathway is membrane lipid metabolism; glycerophospholipid metabolism. In terms of biological role, catalyzes the reduction of the glycolytic intermediate dihydroxyacetone phosphate (DHAP) to sn-glycerol 3-phosphate (G3P), the key precursor for phospholipid synthesis. The polypeptide is Glycerol-3-phosphate dehydrogenase [NAD(P)+] (Polaromonas sp. (strain JS666 / ATCC BAA-500)).